Here is a 181-residue protein sequence, read N- to C-terminus: MKFLFDLFPVILFFITFKIYGIYAATAVAIGATFAQIGWVWFRHGKVDTMLWVSLVLIVVFGSATLILQDETFIKWKPSVLYWLFAAALLIAQAIFKKNFIRTMMKEQLTLPEPVWARVNASWAAFFAFMGAANLYVAFNYSTETWVNFKLFGFMGLMLVFVVLQGLMLSKYMATDEDKEA.

The next 5 membrane-spanning stretches (helical) occupy residues 3–23, 49–69, 76–96, 119–139, and 149–169; these read FLFD…YGIY, TMLW…LILQ, WKPS…QAIF, VNAS…YVAF, and FKLF…GLML.

Belongs to the YciB family.

It is found in the cell inner membrane. In terms of biological role, plays a role in cell envelope biogenesis, maintenance of cell envelope integrity and membrane homeostasis. The polypeptide is Inner membrane-spanning protein YciB (Nitrosospira multiformis (strain ATCC 25196 / NCIMB 11849 / C 71)).